A 419-amino-acid polypeptide reads, in one-letter code: 1,4-beta-D-glucan cellobiohydrolase CEL6B (419 aa).

An N-terminal signal peptide occupies residues 1–47 (MGESFLLLQPASPALSPTPSSLLLGPTITMRADVLIAALATGALVAA). Residues Trp-111 and Ser-113 each coordinate substrate. Catalysis depends on proton donor residues Asp-152 and Asp-199. Trp-247 provides a ligand contact to substrate. N-linked (GlcNAc...) asparagine glycosylation is present at Asn-284. Asn-287 contributes to the substrate binding site. Asn-298 is a glycosylation site (N-linked (GlcNAc...) asparagine). A substrate-binding site is contributed by Trp-347. N-linked (GlcNAc...) asparagine glycosylation occurs at Asn-364. Substrate-binding residues include Lys-375 and Glu-379.

Belongs to the glycosyl hydrolase 6 (cellulase B) family. Both N- and O-glycosylated.

Its subcellular location is the secreted. The enzyme catalyses Hydrolysis of (1-&gt;4)-beta-D-glucosidic linkages in cellulose and cellotetraose, releasing cellobiose from the non-reducing ends of the chains.. Functionally, exoglucanase that plays an important function in biomass degradation by catalyzing the hydrolysis of the non-reducing end beta-1,4-glucosidic linkages in cellulose and cellotetraose to release cellobiose. Hydrolyzes crystalline and amorphous cellulose but is inactive on hydroxyethyl cellulose, mannan, galactomannan, xyloglucan, arabinoxylan, arabinan, xylan, and pectin. The sequence is that of 1,4-beta-D-glucan cellobiohydrolase CEL6B from Podospora anserina (strain S / ATCC MYA-4624 / DSM 980 / FGSC 10383) (Pleurage anserina).